A 297-amino-acid chain; its full sequence is Small ribosomal subunit protein uS2 (297 aa).

The tract at residues 252 to 297 (GVPGTAFSAATAAPTSWEADGGDWAASSAAPAGESWAETQPAEAKW) is disordered. The segment covering 256–289 (TAFSAATAAPTSWEADGGDWAASSAAPAGESWAE) has biased composition (low complexity).

It belongs to the universal ribosomal protein uS2 family. In terms of assembly, component of the small ribosomal subunit. Mature ribosomes consist of a small (40S) and a large (60S) subunit. The 40S subunit contains about 33 different proteins and 1 molecule of RNA (18S). The 60S subunit contains about 49 different proteins and 3 molecules of RNA (25S, 5.8S and 5S). Interacts with rps21.

It is found in the cytoplasm. Required for the assembly and/or stability of the 40S ribosomal subunit. Required for the processing of the 20S rRNA-precursor to mature 18S rRNA in a late step of the maturation of 40S ribosomal subunits. This chain is Small ribosomal subunit protein uS2 (rps0), found in Aspergillus fumigatus (strain CBS 144.89 / FGSC A1163 / CEA10) (Neosartorya fumigata).